We begin with the raw amino-acid sequence, 169 residues long: Cysteine synthase B (169 aa).

K45 bears the N6-(pyridoxal phosphate)lysine mark. N75 lines the pyridoxal 5'-phosphate pocket. The disordered stretch occupies residues 146–169 (ANGDNPEAHYTSTGPEIWRQTGGT).

The protein belongs to the cysteine synthase/cystathionine beta-synthase family. Requires pyridoxal 5'-phosphate as cofactor.

The enzyme catalyses O-acetyl-L-serine + hydrogen sulfide = L-cysteine + acetate. It participates in amino-acid biosynthesis; L-cysteine biosynthesis; L-cysteine from L-serine: step 2/2. The polypeptide is Cysteine synthase B (cysM) (Pseudomonas syringae pv. syringae).